The primary structure comprises 352 residues: Phosphate acetyltransferase (352 aa).

This sequence belongs to the phosphate acetyltransferase and butyryltransferase family.

The protein localises to the cytoplasm. The catalysed reaction is acetyl-CoA + phosphate = acetyl phosphate + CoA. It participates in metabolic intermediate biosynthesis; acetyl-CoA biosynthesis; acetyl-CoA from acetate: step 2/2. The sequence is that of Phosphate acetyltransferase (pta) from Borreliella burgdorferi (strain ATCC 35210 / DSM 4680 / CIP 102532 / B31) (Borrelia burgdorferi).